The following is a 349-amino-acid chain: Interleukin-10 receptor subunit beta (349 aa).

The first 19 residues, 1-19 (MAPCVAGWLGGFLLVPALG), serve as a signal peptide directing secretion. The Extracellular portion of the chain corresponds to 20–220 (MIPPPEKVRM…RTGNDEITPS (201 aa)). 2 Fibronectin type-III domains span residues 23–111 (PPEK…VEDT) and 112–215 (IIGP…TGND). The N-linked (GlcNAc...) asparagine glycan is linked to N49. A disulfide bridge connects residues C66 and C74. 3 N-linked (GlcNAc...) asparagine glycosylation sites follow: N102, N161, and N199. Cysteines 188 and 209 form a disulfide. A helical transmembrane segment spans residues 221–241 (WIVAIILIVSVLVVFLFLLGC). The Cytoplasmic segment spans residues 242–349 (FVVLWLIYKK…PKLLTSTSEV (108 aa)). The residue at position 299 (S299) is a Phosphoserine. The segment at 300–349 (EESEGSKQSPEDNCASEPPSDPGPRELESKDEAPSPPHDDPKLLTSTSEV) is disordered. Over residues 322-341 (GPRELESKDEAPSPPHDDPK) the composition is skewed to basic and acidic residues.

This sequence belongs to the type II cytokine receptor family. Heterodimer with IFNLR1.

It is found in the membrane. In terms of biological role, shared cell surface receptor required for the activation of five class 2 cytokines: IL10, IL22, IL26, IL28, and IFNL1. The IFNLR1/IL10RB dimer is a receptor for the cytokine ligands IFNL2 and IFNL3 and mediates their antiviral activity. The ligand/receptor complex stimulate the activation of the JAK/STAT signaling pathway leading to the expression of IFN-stimulated genes (ISG), which contribute to the antiviral state. This chain is Interleukin-10 receptor subunit beta (Il10rb), found in Mus musculus (Mouse).